The sequence spans 208 residues: Thymidylate kinase (208 aa).

Residue 11–18 coordinates ATP; sequence GTEGVGKT.

Belongs to the thymidylate kinase family.

It catalyses the reaction dTMP + ATP = dTDP + ADP. Phosphorylation of dTMP to form dTDP in both de novo and salvage pathways of dTTP synthesis. This Psychrobacter sp. (strain PRwf-1) protein is Thymidylate kinase.